The sequence spans 83 residues: ATP synthase subunit c, chloroplastic (83 aa).

2 consecutive transmembrane segments (helical) span residues 4-24 and 57-77; these read IISA…AIGP and LAFM…LLFA.

Belongs to the ATPase C chain family. As to quaternary structure, F-type ATPases have 2 components, F(1) - the catalytic core - and F(0) - the membrane proton channel. F(1) has five subunits: alpha(3), beta(3), gamma(1), delta(1), epsilon(1). F(0) has four main subunits: a(1), b(1), b'(1) and c(10-14). The alpha and beta chains form an alternating ring which encloses part of the gamma chain. F(1) is attached to F(0) by a central stalk formed by the gamma and epsilon chains, while a peripheral stalk is formed by the delta, b and b' chains.

Its subcellular location is the plastid. The protein resides in the chloroplast thylakoid membrane. Functionally, f(1)F(0) ATP synthase produces ATP from ADP in the presence of a proton or sodium gradient. F-type ATPases consist of two structural domains, F(1) containing the extramembraneous catalytic core and F(0) containing the membrane proton channel, linked together by a central stalk and a peripheral stalk. During catalysis, ATP synthesis in the catalytic domain of F(1) is coupled via a rotary mechanism of the central stalk subunits to proton translocation. Its function is as follows. Key component of the F(0) channel; it plays a direct role in translocation across the membrane. A homomeric c-ring of between 10-14 subunits forms the central stalk rotor element with the F(1) delta and epsilon subunits. The chain is ATP synthase subunit c, chloroplastic from Galdieria sulphuraria (Red alga).